Reading from the N-terminus, the 445-residue chain is tRNA-2-methylthio-N(6)-dimethylallyladenosine synthase (445 aa).

Residues 3–120 (RKLFIQTHGC…LPGLITQAAS (118 aa)) enclose the MTTase N-terminal domain. Residues cysteine 12, cysteine 49, cysteine 83, cysteine 157, cysteine 161, and cysteine 164 each coordinate [4Fe-4S] cluster. Residues 143 to 375 (SVDGPSAFVS…QQRINQNVQD (233 aa)) enclose the Radical SAM core domain. Residues 378–442 (RKMVGSTQRI…SNSLLGTDPR (65 aa)) enclose the TRAM domain.

This sequence belongs to the methylthiotransferase family. MiaB subfamily. As to quaternary structure, monomer. [4Fe-4S] cluster is required as a cofactor.

The protein resides in the cytoplasm. It catalyses the reaction N(6)-dimethylallyladenosine(37) in tRNA + (sulfur carrier)-SH + AH2 + 2 S-adenosyl-L-methionine = 2-methylsulfanyl-N(6)-dimethylallyladenosine(37) in tRNA + (sulfur carrier)-H + 5'-deoxyadenosine + L-methionine + A + S-adenosyl-L-homocysteine + 2 H(+). Catalyzes the methylthiolation of N6-(dimethylallyl)adenosine (i(6)A), leading to the formation of 2-methylthio-N6-(dimethylallyl)adenosine (ms(2)i(6)A) at position 37 in tRNAs that read codons beginning with uridine. This chain is tRNA-2-methylthio-N(6)-dimethylallyladenosine synthase, found in Alcanivorax borkumensis (strain ATCC 700651 / DSM 11573 / NCIMB 13689 / SK2).